Reading from the N-terminus, the 156-residue chain is MAKYTISKHRLEELQLELREILDVKWPAITKQLQDAREQGDLSENADYDAAKNEQAALKKRKDEIEEILENYELIEDVLRSTDEVSIGSTIEIYNYQKDCEEVITLVGSMDSDPFANKISIDTPLGKALVKQKKGTEVTVHTLASPYKVKIIKIID.

A coiled-coil region spans residues 1–84 (MAKYTISKHR…IEDVLRSTDE (84 aa)).

The protein belongs to the GreA/GreB family.

In terms of biological role, necessary for efficient RNA polymerase transcription elongation past template-encoded arresting sites. The arresting sites in DNA have the property of trapping a certain fraction of elongating RNA polymerases that pass through, resulting in locked ternary complexes. Cleavage of the nascent transcript by cleavage factors such as GreA or GreB allows the resumption of elongation from the new 3'terminus. GreA releases sequences of 2 to 3 nucleotides. The chain is Transcription elongation factor GreA from Ureaplasma parvum serovar 3 (strain ATCC 27815 / 27 / NCTC 11736).